A 437-amino-acid chain; its full sequence is F-box only protein 9 (437 aa).

Residues 1–29 (MAEAEEDCHSEAVREGDDDDENESPAETD) form a disordered region. A compositionally biased stretch (acidic residues) spans 16 to 26 (GDDDDENESPA). One copy of the TPR repeat lies at 84–117 (ARELFLKAVEEEQNGALYEAIKFYRRAMQLVPDI). Ser-126 is modified (phosphoserine). An F-box domain is found at 175–226 (QTHISALPMEVLMYVFRWVVSSDLDLRSLEQLSQVCRGFYICARDPEIWRLA).

In terms of assembly, part of the SCF (SKP1-CUL1-F-box) E3 ubiquitin-protein ligase complex SCF(FBXO9) composed of CUL1, SKP1, RBX1 and FBXO9. Interacts with TTI1 and TELO2; when TTI1 and TELO2 are phosphorylated by CK2.

It localises to the cytoplasm. The protein operates within protein modification; protein ubiquitination. Functionally, substrate recognition component of a SCF (SKP1-CUL1-F-box protein) E3 ubiquitin-protein ligase complex which mediates the ubiquitination and subsequent proteasomal degradation of target proteins and plays a role in several biological processes such as cell cycle, cell proliferation, or maintenance of chromosome stability. Ubiquitinates mTORC1-bound TTI1 and TELO2 when they are phosphorylated by CK2 following growth factor deprivation, leading to their degradation. In contrast, does not mediate ubiquitination of TTI1 and TELO2 when they are part of the mTORC2 complex. As a consequence, mTORC1 is inactivated to restrain cell growth and protein translation, while mTORC2 is the activated due to the relief of feedback inhibition by mTORC1. Plays a role in maintaining epithelial cell survival by regulating the turn-over of chromatin modulator PRMT4 through ubiquitination and degradation by the proteasomal pathway. Also regulates PPARgamma stability by facilitating PPARgamma/PPARG ubiquitination and thereby plays a role in adipocyte differentiation. The protein is F-box only protein 9 (FBXO9) of Bos taurus (Bovine).